A 358-amino-acid chain; its full sequence is 4-hydroxy-2-oxovalerate aldolase 2 (358 aa).

Positions valine 16 to methionine 268 constitute a Pyruvate carboxyltransferase domain. Arginine 24–aspartate 25 contributes to the substrate binding site. Aspartate 25 serves as a coordination point for Mn(2+). Histidine 28 serves as the catalytic Proton acceptor. Residues serine 178 and histidine 207 each contribute to the substrate site. Residues histidine 207 and histidine 209 each contribute to the Mn(2+) site. Tyrosine 298 provides a ligand contact to substrate.

Belongs to the 4-hydroxy-2-oxovalerate aldolase family.

The enzyme catalyses (S)-4-hydroxy-2-oxopentanoate = acetaldehyde + pyruvate. This chain is 4-hydroxy-2-oxovalerate aldolase 2, found in Methylibium petroleiphilum (strain ATCC BAA-1232 / LMG 22953 / PM1).